The sequence spans 723 residues: MGKKKQEEEQNSSEYGAPAQYDPTFNGPIHKRSCTDIICCVLFMLVITGYMVVGILAWLYGDPRHVLYPRNSTGMFCGIGQNQNKPSVLYFDILKCATATNIMAAALQGLQCPTTQVCVSSCPSGFWALSPLAYLPNAKPADYFQQELCVPSLQLKDTTYTVMEIINKELCPYYYTPTTSVLDRCLPSLGGSAYNPSNIPANFSLPGLSINQTLSTIANATSDLTNSFNMKDVGLRIFEDFAKTWQWIVAGLVIAMVVSVLFLLLLRFTAPVLIWILIFGVLAVGAFGIWYCYNDYMSLASSNLTFSNVGFTTNVQVYLQVRDTWLAFLIILCIVEAVLILALIFLRTRILIAIALIQETSKALGHMMSTLLYPVVTFVLLLVCVSYWGITALYLATSGAPIYKVVALNTTQGDCSNIQANQTCDPQTFNSSRYSSCPSARCVFINYNTEGLFQRNLFNLQIYNVVAFLWCVNFVIALGHCTLAGAFASYYWAFSKPADIPTFPLTQSFMRALRYHVGSLAFGALILTLVQIVRIILEYLDHKFKAAQNPCARFLMCCLKCCFWCLEKFIKFINRNAYIMIAIYGKNFCVSAKNAFFLLMRNIVRVVVLDKVTDLLLFFGKLLVVGGIGVLAFFFFSGRIQLPGNTFQTAALNYYWMPIITVVFGAYLIAHGFFSVYNMGVDTLFLCFLEDLERNDGSAEKPYFMSKNLMKILNKKNKQPKTG.

The Cytoplasmic segment spans residues 1–36 (MGKKKQEEEQNSSEYGAPAQYDPTFNGPIHKRSCTD). A helical membrane pass occupies residues 37-57 (IICCVLFMLVITGYMVVGILA). Topologically, residues 58–245 (WLYGDPRHVL…RIFEDFAKTW (188 aa)) are extracellular. N-linked (GlcNAc...) asparagine glycans are attached at residues asparagine 71, asparagine 202, asparagine 211, and asparagine 219. A helical membrane pass occupies residues 246-266 (QWIVAGLVIAMVVSVLFLLLL). Residues 267 to 269 (RFT) are Cytoplasmic-facing. A helical transmembrane segment spans residues 270-290 (APVLIWILIFGVLAVGAFGIW). Topologically, residues 291–325 (YCYNDYMSLASSNLTFSNVGFTTNVQVYLQVRDTW) are extracellular. Asparagine 303 carries an N-linked (GlcNAc...) asparagine glycan. Residues 326–346 (LAFLIILCIVEAVLILALIFL) traverse the membrane as a helical segment. The Cytoplasmic portion of the chain corresponds to 347 to 374 (RTRILIAIALIQETSKALGHMMSTLLYP). A helical transmembrane segment spans residues 375-395 (VVTFVLLLVCVSYWGITALYL). At 396-464 (ATSGAPIYKV…RNLFNLQIYN (69 aa)) the chain is on the extracellular side. Residues asparagine 409, asparagine 421, and asparagine 430 are each glycosylated (N-linked (GlcNAc...) asparagine). A helical membrane pass occupies residues 465 to 485 (VVAFLWCVNFVIALGHCTLAG). Topologically, residues 486–516 (AFASYYWAFSKPADIPTFPLTQSFMRALRYH) are cytoplasmic. A helical transmembrane segment spans residues 517–537 (VGSLAFGALILTLVQIVRIIL). The Extracellular segment spans residues 538-578 (EYLDHKFKAAQNPCARFLMCCLKCCFWCLEKFIKFINRNAY). A helical transmembrane segment spans residues 579–599 (IMIAIYGKNFCVSAKNAFFLL). At 600-615 (MRNIVRVVVLDKVTDL) the chain is on the cytoplasmic side. A helical transmembrane segment spans residues 616-636 (LLFFGKLLVVGGIGVLAFFFF). Over 637 to 655 (SGRIQLPGNTFQTAALNYY) the chain is Extracellular. A helical transmembrane segment spans residues 656–676 (WMPIITVVFGAYLIAHGFFSV). Residues 677-723 (YNMGVDTLFLCFLEDLERNDGSAEKPYFMSKNLMKILNKKNKQPKTG) are Cytoplasmic-facing.

It belongs to the CTL (choline transporter-like) family.

It is found in the membrane. It localises to the apical cell membrane. The enzyme catalyses choline(out) + n H(+)(in) = choline(in) + n H(+)(out). It catalyses the reaction thiamine diphosphate(out) = thiamine diphosphate(in). In terms of biological role, choline transporter that seems to play a role in the choline-acetylcholine system and is required to the efferent innervation of hair cells in the olivocochlear bundle for the maintenance of physiological function of outer hair cells and the protection of hair cells from acoustic injury. Also described as a thiamine pyrophosphate transporter. This Danio rerio (Zebrafish) protein is Choline transporter-like protein 4 (slc44a4).